The sequence spans 360 residues: MAGHLTSDFAFSPPPGGGGDGPGGPEPGWVDPRTWLSFQGPPGGPGIGPGVGPGSEVWGIPPCPPPYEFCGGMAYCGPQVGVGLVPQGGLETSQPEGEAGVGVESNSDGASPEPCTVTPGAVKLEKEKLEQNPEESQDIKALQKELEQFAKLLKQKRITLGYTQADVGLTLGVLFGKVFSQTTICRFEALQLSFKNMCKLRPLLQKWVEEADNNENLQEICKAETLVQARKRKRTSIENRVRGNLENLFLQCPKPTLQQISHIAQQLGLEKDVVRVWFCNRRQKGKRSSSDYAQREDFEAAGSPFSGGPVSFPLAPGPHFGTPGYGSPHFTALYSSVPFPEGEAFPPVSVTTLGSPMHSN.

Disordered stretches follow at residues 1 to 51 (MAGH…GPGV) and 88 to 114 (GGLE…SPEP). The 9aaTAD motif lies at 4 to 12 (HLTSDFAFS). Serine 111 bears the Phosphoserine; by MAPK mark. Residue lysine 123 forms a Glycyl lysine isopeptide (Lys-Gly) (interchain with G-Cter in SUMO) linkage. The 75-residue stretch at 138–212 (DIKALQKELE…LLQKWVEEAD (75 aa)) folds into the POU-specific domain. DNA is bound by residues arginine 157 and glutamine 164. 2 DNA-binding regions span residues 180-186 (SQTTICR) and 193-196 (SFKN). Residues 230 to 289 (RKRKRTSIENRVRGNLENLFLQCPKPTLQQISHIAQQLGLEKDVVRVWFCNRRQKGKRSS) constitute a DNA-binding region (homeobox). Threonine 235 carries the post-translational modification Phosphothreonine. Phosphoserine is present on residues serine 236, serine 289, serine 290, and serine 355.

This sequence belongs to the POU transcription factor family. Class-5 subfamily. Interacts with PKM. Interacts with WWP2. Interacts with UBE2I and ZSCAN10. Interacts with PCGF1. Interacts with ESRRB; recruits ESRRB near the POU5F1-SOX2 element in the NANOG proximal promoter; the interaction is DNA independent. Interacts with ZNF322. Interacts with MAPK8 and MAPK9; the interaction allows MAPK8 and MAPK9 to phosphorylate POU5F1 on Ser-355. Interacts (when phosphorylated on Ser-355) with FBXW8. Interacts with FBXW4. Interacts with SOX2 and SOX15; binds synergistically with either SOX2 or SOX15 to DNA. Interacts with DDX56. Post-translationally, sumoylation enhances the protein stability, DNA binding and transactivation activity. Sumoylation is required for enhanced YES1 expression. In terms of processing, ubiquitinated; undergoes 'Lys-63'-linked polyubiquitination by WWP2 leading to proteasomal degradation. ERK1/2-mediated phosphorylation at Ser-111 promotes nuclear exclusion and proteasomal degradation. Phosphorylation at Thr-235 and Ser-236 decrease DNA-binding and alters ability to activate transcription.

Its subcellular location is the cytoplasm. The protein localises to the nucleus. In terms of biological role, transcription factor that binds to the octamer motif (5'-ATTTGCAT-3'). Forms a trimeric complex with SOX2 or SOX15 on DNA and controls the expression of a number of genes involved in embryonic development such as YES1, FGF4, UTF1 and ZFP206. Critical for early embryogenesis and for embryonic stem cell pluripotency. In Pan troglodytes (Chimpanzee), this protein is POU domain, class 5, transcription factor 1 (POU5F1).